Consider the following 234-residue polypeptide: Sugar fermentation stimulation protein homolog (234 aa).

It belongs to the SfsA family.

The polypeptide is Sugar fermentation stimulation protein homolog (Shewanella loihica (strain ATCC BAA-1088 / PV-4)).